Reading from the N-terminus, the 282-residue chain is HTH-type transcriptional activator RhaR (282 aa).

The HTH araC/xylS-type domain occupies 179–277; that stretch reads DKLITRLAAS…GMTPSQWRHL (99 aa). 2 DNA-binding regions (H-T-H motif) span residues 196–217 and 244–267; these read DKFC…RQQT and ISDI…TRET.

As to quaternary structure, binds DNA as a dimer.

The protein localises to the cytoplasm. Activates expression of the rhaSR operon in response to L-rhamnose. This Shigella dysenteriae serotype 1 (strain Sd197) protein is HTH-type transcriptional activator RhaR.